Consider the following 380-residue polypeptide: Crotonobetainyl-CoA reductase (380 aa).

This sequence belongs to the acyl-CoA dehydrogenase family. As to quaternary structure, homotetramer. Requires FAD as cofactor.

The protein resides in the cytoplasm. The catalysed reaction is 4-(trimethylamino)butanoyl-CoA + oxidized [electron-transfer flavoprotein] + H(+) = crotonobetainyl-CoA + reduced [electron-transfer flavoprotein]. It functions in the pathway amine and polyamine metabolism; carnitine metabolism. Its function is as follows. Catalyzes the reduction of crotonobetainyl-CoA to gamma-butyrobetainyl-CoA. The sequence is that of Crotonobetainyl-CoA reductase from Escherichia coli (strain UTI89 / UPEC).